The chain runs to 277 residues: Phosphatidylglycerol--prolipoprotein diacylglyceryl transferase (277 aa).

3 consecutive transmembrane segments (helical) span residues 16-36, 62-82, and 101-121; these read FFQI…FYFL, LLFF…VLFY, and GMAF…FAHL. Arg145 lines the a 1,2-diacyl-sn-glycero-3-phospho-(1'-sn-glycerol) pocket. Helical transmembrane passes span 214–234 and 243–263; these read PIWG…RFIA and FLGL…PMIV.

This sequence belongs to the Lgt family.

It is found in the cell inner membrane. It carries out the reaction L-cysteinyl-[prolipoprotein] + a 1,2-diacyl-sn-glycero-3-phospho-(1'-sn-glycerol) = an S-1,2-diacyl-sn-glyceryl-L-cysteinyl-[prolipoprotein] + sn-glycerol 1-phosphate + H(+). It participates in protein modification; lipoprotein biosynthesis (diacylglyceryl transfer). Functionally, catalyzes the transfer of the diacylglyceryl group from phosphatidylglycerol to the sulfhydryl group of the N-terminal cysteine of a prolipoprotein, the first step in the formation of mature lipoproteins. The chain is Phosphatidylglycerol--prolipoprotein diacylglyceryl transferase from Leptothrix cholodnii (strain ATCC 51168 / LMG 8142 / SP-6) (Leptothrix discophora (strain SP-6)).